Consider the following 150-residue polypeptide: MDASTKTKKGAGGRKGGGPRKKSVTRSVRAGLQFPVGRVGRFLKKGRYAQRVGTGAPVYLAAVLEYLAAEVLELAGNAARDNKKNRISPRHLLLAVRNDEELGKLLAGVTIAYGGVLPNINPVLLPKRKENAAASTPKSPSKAKKSPKKA.

Residue Met1 is modified to N-acetylmethionine. Basic residues-rich tracts occupy residues 1–24 and 141–150; these read MDAS…KKSV and SKAKKSPKKA. 2 disordered regions span residues 1–26 and 128–150; these read MDAS…SVTR and RKEN…PKKA. 2 short sequence motifs (SPKK motif) span residues 139–142 and 146–149; these read SPSK and SPKK.

The protein belongs to the histone H2A family. As to quaternary structure, the nucleosome is a histone octamer containing two molecules each of H2A, H2B, H3 and H4 assembled in one H3-H4 heterotetramer and two H2A-H2B heterodimers. The octamer wraps approximately 147 bp of DNA. In terms of tissue distribution, high expression in root meristematic tissues, moderate in whole shoot and very low in mature leaves.

The protein resides in the nucleus. It localises to the chromosome. Core component of nucleosome. Nucleosomes wrap and compact DNA into chromatin, limiting DNA accessibility to the cellular machineries which require DNA as a template. Histones thereby play a central role in transcription regulation, DNA repair, DNA replication and chromosomal stability. DNA accessibility is regulated via a complex set of post-translational modifications of histones, also called histone code, and nucleosome remodeling. The chain is Histone H2A.1 from Pisum sativum (Garden pea).